The chain runs to 1690 residues: Trinucleotide repeat-containing gene 6C protein (1690 aa).

Polar residues-rich tracts occupy residues M1–S12, G19–A36, and A160–G183. Disordered stretches follow at residues M1–T42, E158–T202, P226–V848, and C863–K928. The interval M1–K921 is sufficient for interaction with argonaute family proteins. Residues P184–N198 are compositionally biased toward low complexity. The span at N255–V288 shows a compositional bias: polar residues. Omega-N-methylarginine is present on R313. The segment covering G362–A374 has biased composition (polar residues). Over residues S384–G404 the composition is skewed to low complexity. Over residues G415 to V426 the composition is skewed to basic and acidic residues. Over residues L444–A459 the composition is skewed to polar residues. The segment covering E464–N474 has biased composition (basic and acidic residues). S465 is subject to Phosphoserine. Polar residues-rich tracts occupy residues I482 to V510, A519 to A530, S540 to A551, G644 to G656, and P663 to N678. Phosphoserine is present on S714. The span at S754 to T771 shows a compositional bias: low complexity. Residue T776 is modified to Phosphothreonine. The span at P778–R788 shows a compositional bias: polar residues. Residues S901–S915 show a composition bias toward low complexity. Residues K928–K973 enclose the UBA domain. Position 1006 is a phosphoserine (S1006). Residues Q1156–Q1214 are a coiled coil. 5 disordered regions span residues V1212–K1337, Q1351–G1380, G1397–N1421, I1441–T1486, and P1600–L1625. The span at Q1214 to H1223 shows a compositional bias: pro residues. The tract at residues N1260–I1690 is silencing domain; interaction with CNOT1 and PAN3. The span at P1272–S1321 shows a compositional bias: polar residues. The required for interaction with PABPC1 stretch occupies residues K1371–G1417. Residues K1371–I1690 form a sufficient for translational repression when tethered to a target mRNA region. A PABPC1-interacting motif-2 (PAM2) region spans residues S1381–Q1399. The span at I1441 to L1457 shows a compositional bias: polar residues. In terms of domain architecture, RRM spans A1565–H1632. Positions G1596 to I1690 are interaction with the CCR4-NOT complex. Over residues S1603–Q1613 the composition is skewed to low complexity.

This sequence belongs to the GW182 family. As to quaternary structure, interacts with one or more of the argonaute family proteins AGO1, AGO2, AGO3 and AGO4. Interacts with CNOT1; the interaction mediates the association with the CCR4-NOT complex. Interacts with PAN3; the interaction mediates the association with the PAN complex.

Its function is as follows. Plays a role in RNA-mediated gene silencing by micro-RNAs (miRNAs). Required for miRNA-dependent translational repression of complementary mRNAs by argonaute family proteins As scaffoldng protein associates with argonaute proteins bound to partially complementary mRNAs and simultaneously can recruit CCR4-NOT and PAN deadenylase complexes. The protein is Trinucleotide repeat-containing gene 6C protein (Tnrc6c) of Mus musculus (Mouse).